We begin with the raw amino-acid sequence, 192 residues long: Ribosome maturation factor RimM (192 aa).

Residues 115–189 (EGEYYLSDLI…RIEITPPKGL (75 aa)) form the PRC barrel domain.

It belongs to the RimM family. Binds ribosomal protein uS19.

The protein resides in the cytoplasm. Its function is as follows. An accessory protein needed during the final step in the assembly of 30S ribosomal subunit, possibly for assembly of the head region. Essential for efficient processing of 16S rRNA. May be needed both before and after RbfA during the maturation of 16S rRNA. It has affinity for free ribosomal 30S subunits but not for 70S ribosomes. The polypeptide is Ribosome maturation factor RimM (Acaryochloris marina (strain MBIC 11017)).